A 108-amino-acid chain; its full sequence is Nucleoid-associated protein BH02310 (108 aa).

The protein belongs to the YbaB/EbfC family. In terms of assembly, homodimer.

The protein localises to the cytoplasm. It localises to the nucleoid. Binds to DNA and alters its conformation. May be involved in regulation of gene expression, nucleoid organization and DNA protection. In Bartonella henselae (strain ATCC 49882 / DSM 28221 / CCUG 30454 / Houston 1) (Rochalimaea henselae), this protein is Nucleoid-associated protein BH02310.